The primary structure comprises 240 residues: UDP-2,3-diacylglucosamine hydrolase (240 aa).

Mn(2+) is bound by residues D8, H10, D41, N78, and H113. 78–79 (NR) serves as a coordination point for substrate. Substrate is bound by residues D121, S159, N163, K166, and H194. Residues H194 and H196 each coordinate Mn(2+).

This sequence belongs to the LpxH family. The cofactor is Mn(2+).

The protein resides in the cell inner membrane. The catalysed reaction is UDP-2-N,3-O-bis[(3R)-3-hydroxytetradecanoyl]-alpha-D-glucosamine + H2O = 2-N,3-O-bis[(3R)-3-hydroxytetradecanoyl]-alpha-D-glucosaminyl 1-phosphate + UMP + 2 H(+). The protein operates within glycolipid biosynthesis; lipid IV(A) biosynthesis; lipid IV(A) from (3R)-3-hydroxytetradecanoyl-[acyl-carrier-protein] and UDP-N-acetyl-alpha-D-glucosamine: step 4/6. Its function is as follows. Hydrolyzes the pyrophosphate bond of UDP-2,3-diacylglucosamine to yield 2,3-diacylglucosamine 1-phosphate (lipid X) and UMP by catalyzing the attack of water at the alpha-P atom. Involved in the biosynthesis of lipid A, a phosphorylated glycolipid that anchors the lipopolysaccharide to the outer membrane of the cell. The protein is UDP-2,3-diacylglucosamine hydrolase of Shewanella baltica (strain OS155 / ATCC BAA-1091).